The sequence spans 341 residues: 1-aminocyclopropane-1-carboxylate deaminase (341 aa).

Ser1 bears the N-acetylserine mark. Lys51 carries the N6-(pyridoxal phosphate)lysine modification. The active-site Nucleophile is the Ser78.

This sequence belongs to the ACC deaminase/D-cysteine desulfhydrase family. Homodimer. The cofactor is pyridoxal 5'-phosphate.

The enzyme catalyses 1-aminocyclopropane-1-carboxylate + H2O = 2-oxobutanoate + NH4(+). Its function is as follows. Catalyzes a cyclopropane ring-opening reaction, the irreversible conversion of 1-aminocyclopropane-1-carboxylate (ACC) to ammonia and alpha-ketobutyrate. This Cyberlindnera saturnus (Yeast) protein is 1-aminocyclopropane-1-carboxylate deaminase.